We begin with the raw amino-acid sequence, 313 residues long: Porphobilinogen deaminase (313 aa).

Cysteine 241 carries the S-(dipyrrolylmethanemethyl)cysteine modification.

The protein belongs to the HMBS family. Monomer. Dipyrromethane serves as cofactor.

The catalysed reaction is 4 porphobilinogen + H2O = hydroxymethylbilane + 4 NH4(+). It participates in porphyrin-containing compound metabolism; protoporphyrin-IX biosynthesis; coproporphyrinogen-III from 5-aminolevulinate: step 2/4. Functionally, tetrapolymerization of the monopyrrole PBG into the hydroxymethylbilane pre-uroporphyrinogen in several discrete steps. The polypeptide is Porphobilinogen deaminase (Idiomarina loihiensis (strain ATCC BAA-735 / DSM 15497 / L2-TR)).